We begin with the raw amino-acid sequence, 802 residues long: Copper-exporting P-type ATPase (802 aa).

HMA domains follow at residues lysine 5–threonine 70 and glutamate 72–serine 138. Cu(+)-binding residues include cysteine 16, cysteine 19, cysteine 83, and cysteine 86. 6 helical membrane-spanning segments follow: residues leucine 161–asparagine 181, tryptophan 192–glycine 212, methionine 224–valine 244, leucine 256–alanine 276, tyrosine 411–valine 431, and proline 438–alanine 458. Residue aspartate 495 is the 4-aspartylphosphate intermediate of the active site. Residues aspartate 690 and aspartate 694 each contribute to the Mg(2+) site. A run of 2 helical transmembrane segments spans residues leucine 748–leucine 767 and valine 771–leucine 790.

The protein belongs to the cation transport ATPase (P-type) (TC 3.A.3) family. Type IB subfamily.

The protein localises to the cell membrane. The catalysed reaction is Cu(+)(in) + ATP + H2O = Cu(+)(out) + ADP + phosphate + H(+). Functionally, involved in copper export. This chain is Copper-exporting P-type ATPase (copA), found in Staphylococcus aureus (strain N315).